Consider the following 312-residue polypeptide: Zinc transporter ZitB (312 aa).

6 consecutive transmembrane segments (helical) span residues 16 to 36, 40 to 60, 81 to 101, 117 to 137, 153 to 173, and 177 to 197; these read LLIA…GGWL, LALL…FIAL, LTTL…ILIV, TPML…FWIL, LHVL…IVIL, and WTPI…RNAW.

The protein belongs to the cation diffusion facilitator (CDF) transporter (TC 2.A.4) family. SLC30A subfamily.

The protein resides in the cell inner membrane. Functionally, involved in zinc efflux across the cytoplasmic membrane, thus reducing zinc accumulation in the cytoplasm and rendering bacteria more resistant to zinc. It may contribute to zinc homeostasis at low concentrations of zinc. The chain is Zinc transporter ZitB from Yersinia pseudotuberculosis serotype I (strain IP32953).